A 1594-amino-acid chain; its full sequence is RB1-inducible coiled-coil protein 1 (1594 aa).

3 positions are modified to phosphoserine: Ser-222, Ser-229, and Ser-237. Thr-238 carries the phosphothreonine modification. Residues Ser-243, Ser-253, Ser-257, Ser-261, and Ser-266 each carry the phosphoserine modification. A Nuclear localization signal motif is present at residues 566 to 569 (KPRK). Phosphoserine occurs at positions 624, 647, 650, 652, 653, 734, 1091, 1222, 1370, and 1484. The disordered stretch occupies residues 638–673 (EQKASVSQTSPQSASSPRMESTAGITTTTSPRTPPP). The span at 641–654 (ASVSQTSPQSASSP) shows a compositional bias: low complexity. Residues 731–737 (DFMSAVN) carry the FFAT motif. Coiled coils occupy residues 859–1397 (LKEK…SSSF) and 1438–1485 (METS…SQSM).

The protein belongs to the ATG17 family. In terms of assembly, part of a complex consisting of ATG13/KIAA0652, ULK1 and RB1CC1. This complex associates with ATG101. Interacts with PTK2/FAK1 and PTK2B/PYK2. Interacts with GABARAP and GABARAPL1. Interacts with ATG16L1; the interaction is required for ULK1 complex-dependent autophagy. Interacts with RNF111, SKI and SMAD7. Interacts with COP1 in the cytoplasm of proliferating cells in response to UV stimulation. Interacts with TP53. Interacts with C9orf72. Interacts with WDR45B. Interacts with ATG13; this interaction is increased in the absence of TMEM39A. Interacts with WIPI2. Interacts with TAX1BP1. Interacts (via phosphorylated FFAT motif) with MOSPD2, VAPA and VAPB. Phosphorylation at Ser-734 of the FFAT motif activates interaction with MOSPD2, VAPA and VAPB. As to expression, expression levels correlated closely with those of RB1 in cancer cell lines as well as in various normal human tissues. Abundantly expressed in human musculoskeletal and cultured osteosarcoma cells.

The protein localises to the nucleus. It is found in the cytoplasm. Its subcellular location is the cytosol. It localises to the preautophagosomal structure. The protein resides in the lysosome. Involved in autophagy. Regulates early events but also late events of autophagosome formation through direct interaction with Atg16L1. Required for the formation of the autophagosome-like double-membrane structure that surrounds the Salmonella-containing vacuole (SCV) during S.typhimurium infection and subsequent xenophagy. Involved in repair of DNA damage caused by ionizing radiation, which subsequently improves cell survival by decreasing apoptosis. Inhibits PTK2/FAK1 and PTK2B/PYK2 kinase activity, affecting their downstream signaling pathways. Plays a role as a modulator of TGF-beta-signaling by restricting substrate specificity of RNF111. Functions as a DNA-binding transcription factor. Is a potent regulator of the RB1 pathway through induction of RB1 expression. Plays a crucial role in muscular differentiation. Plays an indispensable role in fetal hematopoiesis and in the regulation of neuronal homeostasis. This Homo sapiens (Human) protein is RB1-inducible coiled-coil protein 1.